Here is a 452-residue protein sequence, read N- to C-terminus: Bifunctional protein GlmU (452 aa).

The segment at 1-232 (MTARNSLTIV…EDEVRGINTK (232 aa)) is pyrophosphorylase. Residues 11–14 (LAAG), Lys-25, Gln-78, and 83–84 (GT) contribute to the UDP-N-acetyl-alpha-D-glucosamine site. Asp-108 serves as a coordination point for Mg(2+). Gly-144, Glu-158, Asn-173, and Asn-230 together coordinate UDP-N-acetyl-alpha-D-glucosamine. A Mg(2+)-binding site is contributed by Asn-230. The interval 233-253 (AQLAEAETVMQTRLRLAAMAA) is linker. An N-acetyltransferase region spans residues 254–452 (GVTLIAPETV…KSRHRKPKAH (199 aa)). 2 residues coordinate UDP-N-acetyl-alpha-D-glucosamine: Arg-319 and Lys-337. The active-site Proton acceptor is the His-349. UDP-N-acetyl-alpha-D-glucosamine-binding residues include Tyr-352 and Asn-363. Residues Ala-366, 372–373 (NY), Ser-391, Ser-409, and Arg-426 contribute to the acetyl-CoA site.

It in the N-terminal section; belongs to the N-acetylglucosamine-1-phosphate uridyltransferase family. In the C-terminal section; belongs to the transferase hexapeptide repeat family. In terms of assembly, homotrimer. The cofactor is Mg(2+).

Its subcellular location is the cytoplasm. The enzyme catalyses alpha-D-glucosamine 1-phosphate + acetyl-CoA = N-acetyl-alpha-D-glucosamine 1-phosphate + CoA + H(+). The catalysed reaction is N-acetyl-alpha-D-glucosamine 1-phosphate + UTP + H(+) = UDP-N-acetyl-alpha-D-glucosamine + diphosphate. The protein operates within nucleotide-sugar biosynthesis; UDP-N-acetyl-alpha-D-glucosamine biosynthesis; N-acetyl-alpha-D-glucosamine 1-phosphate from alpha-D-glucosamine 6-phosphate (route II): step 2/2. Its pathway is nucleotide-sugar biosynthesis; UDP-N-acetyl-alpha-D-glucosamine biosynthesis; UDP-N-acetyl-alpha-D-glucosamine from N-acetyl-alpha-D-glucosamine 1-phosphate: step 1/1. It participates in bacterial outer membrane biogenesis; LPS lipid A biosynthesis. Functionally, catalyzes the last two sequential reactions in the de novo biosynthetic pathway for UDP-N-acetylglucosamine (UDP-GlcNAc). The C-terminal domain catalyzes the transfer of acetyl group from acetyl coenzyme A to glucosamine-1-phosphate (GlcN-1-P) to produce N-acetylglucosamine-1-phosphate (GlcNAc-1-P), which is converted into UDP-GlcNAc by the transfer of uridine 5-monophosphate (from uridine 5-triphosphate), a reaction catalyzed by the N-terminal domain. This chain is Bifunctional protein GlmU, found in Rhodopseudomonas palustris (strain ATCC BAA-98 / CGA009).